A 513-amino-acid polypeptide reads, in one-letter code: ATP synthase subunit alpha (513 aa).

169 to 176 (GDRQTGKT) provides a ligand contact to ATP.

It belongs to the ATPase alpha/beta chains family. F-type ATPases have 2 components, CF(1) - the catalytic core - and CF(0) - the membrane proton channel. CF(1) has five subunits: alpha(3), beta(3), gamma(1), delta(1), epsilon(1). CF(0) has three main subunits: a(1), b(2) and c(9-12). The alpha and beta chains form an alternating ring which encloses part of the gamma chain. CF(1) is attached to CF(0) by a central stalk formed by the gamma and epsilon chains, while a peripheral stalk is formed by the delta and b chains.

The protein localises to the cell inner membrane. The enzyme catalyses ATP + H2O + 4 H(+)(in) = ADP + phosphate + 5 H(+)(out). Functionally, produces ATP from ADP in the presence of a proton gradient across the membrane. The alpha chain is a regulatory subunit. In Haemophilus influenzae (strain PittEE), this protein is ATP synthase subunit alpha.